Consider the following 382-residue polypeptide: Pyruvate dehydrogenase E1 component subunit beta, mitochondrial (382 aa).

A mitochondrion-targeting transit peptide spans M1–Y46. E112 is a thiamine diphosphate binding site. Residues I165, A213, I214, D216, and N218 each coordinate K(+).

Eukaryotic pyruvate dehydrogenase (PDH) complexes are organized as a core consisting of the oligomeric dihydrolipoamide acetyl-transferase (E2), around which are arranged multiple copies of pyruvate dehydrogenase (E1), dihydrolipoamide dehydrogenase (E3) and protein X (E3BP) bound by non-covalent bonds. The Chaetomium thermophilum PDH complex contains 60 E2 units, 12 E3BP units, about 20 E1 units, and 12 or more E3 units. The units are organized in 1 E2 60-mer, 4 E3BP trimers, about 20 E1 tetramers, and a maximum of 12 E3 dimers. Pyruvate dehydrogenase (E1) is active as a tetramer of 2 alpha and 2 beta subunits. The E3BP trimers are bound inside the icosahedral core with tetrahedral symmetry. It depends on thiamine diphosphate as a cofactor.

The protein resides in the mitochondrion. It catalyses the reaction N(6)-[(R)-lipoyl]-L-lysyl-[protein] + pyruvate + H(+) = N(6)-[(R)-S(8)-acetyldihydrolipoyl]-L-lysyl-[protein] + CO2. Its function is as follows. The 10-megadalton pyruvate dehydrogenase complex contains multiple copies of three enzymatic components: pyruvate dehydrogenase (E1), dihydrolipoamide acetyltransferase (E2) and lipoamide dehydrogenase (E3) and catalyzes the overall oxidative decarboxylation of pyruvate to form acetyl-CoA and CO(2). Within the complex, pyruvate and thiamine pyrophosphate (TPP or vitamin B1) are bound by pyruvate dehydrogenase E1 subunits alpha and beta and pyruvate is decarboxylated leading to the 2-carbon hydrohyethyl bound to TPP. The E2 component contains covalently-bound lipoyl cofactors and transfers the hydroxyethyl group from TPP to an oxidized form of covalently bound lipoamide, and the resulting acetyl group is then transferred to free coenzyme A to form acetyl-CoA and reduced dihydrolipoamide-E2. Finally, the flavoprotein dihydrolipoamide dehydrogenase (E3) re-oxidizes the lipoyl group of dihydrolipoamide-E2 to form lipoamide-E2 and NADH. A fourth subunit, E3BP, is responsible for tethering E3 in proximity to the core, forming the entire metabolon. The sequence is that of Pyruvate dehydrogenase E1 component subunit beta, mitochondrial from Chaetomium thermophilum (strain DSM 1495 / CBS 144.50 / IMI 039719) (Thermochaetoides thermophila).